Here is a 102-residue protein sequence, read N- to C-terminus: Small ribosomal subunit protein uS10 (102 aa).

The protein belongs to the universal ribosomal protein uS10 family. Part of the 30S ribosomal subunit.

Its function is as follows. Involved in the binding of tRNA to the ribosomes. This is Small ribosomal subunit protein uS10 from Nitrosomonas eutropha (strain DSM 101675 / C91 / Nm57).